A 498-amino-acid polypeptide reads, in one-letter code: ATP synthase subunit beta, chloroplastic (498 aa).

An ATP-binding site is contributed by 172 to 179 (GGAGVGKT).

It belongs to the ATPase alpha/beta chains family. As to quaternary structure, F-type ATPases have 2 components, CF(1) - the catalytic core - and CF(0) - the membrane proton channel. CF(1) has five subunits: alpha(3), beta(3), gamma(1), delta(1), epsilon(1). CF(0) has four main subunits: a(1), b(1), b'(1) and c(9-12).

The protein resides in the plastid. It is found in the chloroplast thylakoid membrane. It catalyses the reaction ATP + H2O + 4 H(+)(in) = ADP + phosphate + 5 H(+)(out). Produces ATP from ADP in the presence of a proton gradient across the membrane. The catalytic sites are hosted primarily by the beta subunits. This chain is ATP synthase subunit beta, chloroplastic, found in Gossypium barbadense (Sea Island cotton).